A 491-amino-acid polypeptide reads, in one-letter code: Argininosuccinate lyase (491 aa).

It belongs to the lyase 1 family. Argininosuccinate lyase subfamily.

It is found in the cytoplasm. The enzyme catalyses 2-(N(omega)-L-arginino)succinate = fumarate + L-arginine. It participates in amino-acid biosynthesis; L-arginine biosynthesis; L-arginine from L-ornithine and carbamoyl phosphate: step 3/3. The sequence is that of Argininosuccinate lyase from Methanosarcina barkeri (strain Fusaro / DSM 804).